Consider the following 155-residue polypeptide: 6,7-dimethyl-8-ribityllumazine synthase (155 aa).

5-amino-6-(D-ribitylamino)uracil-binding positions include F23, 57-59 (AFE), and 81-83 (AVI). Residue 86 to 87 (AT) coordinates (2S)-2-hydroxy-3-oxobutyl phosphate. The active-site Proton donor is H89. A 5-amino-6-(D-ribitylamino)uracil-binding site is contributed by F114. Residue R128 coordinates (2S)-2-hydroxy-3-oxobutyl phosphate.

The protein belongs to the DMRL synthase family.

It carries out the reaction (2S)-2-hydroxy-3-oxobutyl phosphate + 5-amino-6-(D-ribitylamino)uracil = 6,7-dimethyl-8-(1-D-ribityl)lumazine + phosphate + 2 H2O + H(+). Its pathway is cofactor biosynthesis; riboflavin biosynthesis; riboflavin from 2-hydroxy-3-oxobutyl phosphate and 5-amino-6-(D-ribitylamino)uracil: step 1/2. Catalyzes the formation of 6,7-dimethyl-8-ribityllumazine by condensation of 5-amino-6-(D-ribitylamino)uracil with 3,4-dihydroxy-2-butanone 4-phosphate. This is the penultimate step in the biosynthesis of riboflavin. The protein is 6,7-dimethyl-8-ribityllumazine synthase of Geotalea daltonii (strain DSM 22248 / JCM 15807 / FRC-32) (Geobacter daltonii).